Consider the following 425-residue polypeptide: Serine--tRNA ligase (425 aa).

Residue 230–232 (TAE) participates in L-serine binding. Position 261-263 (261-263 (RAE)) interacts with ATP. L-serine is bound at residue glutamate 284. 348–351 (EISS) provides a ligand contact to ATP. Serine 384 contacts L-serine.

The protein belongs to the class-II aminoacyl-tRNA synthetase family. Type-1 seryl-tRNA synthetase subfamily. In terms of assembly, homodimer. The tRNA molecule binds across the dimer.

The protein localises to the cytoplasm. The enzyme catalyses tRNA(Ser) + L-serine + ATP = L-seryl-tRNA(Ser) + AMP + diphosphate + H(+). It catalyses the reaction tRNA(Sec) + L-serine + ATP = L-seryl-tRNA(Sec) + AMP + diphosphate + H(+). Its pathway is aminoacyl-tRNA biosynthesis; selenocysteinyl-tRNA(Sec) biosynthesis; L-seryl-tRNA(Sec) from L-serine and tRNA(Sec): step 1/1. In terms of biological role, catalyzes the attachment of serine to tRNA(Ser). Is also able to aminoacylate tRNA(Sec) with serine, to form the misacylated tRNA L-seryl-tRNA(Sec), which will be further converted into selenocysteinyl-tRNA(Sec). This is Serine--tRNA ligase from Zymomonas mobilis subsp. mobilis (strain ATCC 31821 / ZM4 / CP4).